Here is a 625-residue protein sequence, read N- to C-terminus: DELLA protein SLR1 (625 aa).

The segment at 1-34 (MKREYQEAGGSSGGGSSADMGSCKDKVMAGAAGE) is disordered. Positions 39–43 (DELLA) match the DELLA motif motif. Residues 167–209 (TADPSAADSARDTKRMRTGGGSTSSSSSSSSSLGGGASRGSVV) form a disordered region. The segment covering 189 to 198 (TSSSSSSSSS) has biased composition (low complexity). The 390-residue stretch at 232–621 (VDTQEAGIRL…RPLIATSAWR (390 aa)) folds into the GRAS domain. Residues 239–294 (IRLVHALLACAEAVQQENFAAAEALVKQIPTLAASQGGAMRKVAAYFGEALARRVY) form a leucine repeat I (LRI) region. Positions 241 to 278 (LVHALLACAEAVQQENFAAAEALVKQIPTLAASQGGAM) are required for possible homodimerization. The short motif at 246-250 (LACAE) is the LxCxE motif element. The interval 313 to 378 (HAHFYESCPY…GGPPSFRLTG (66 aa)) is VHIID. The VHIID motif lies at 344 to 348 (VHVVD). The tract at residues 392 to 431 (QVGWKLAQFAHTIRVDFQYRGLVAATLADLEPFMLQPEGE) is leucine repeat II (LRII). Residues 441–542 (IAVNSVFELH…EVYLGRQICN (102 aa)) are PFYRE. Positions 449–453 (LHRLL) match the LXXLL motif motif. The tract at residues 545 to 621 (ACEGAERTER…RPLIATSAWR (77 aa)) is SAW.

This sequence belongs to the GRAS family. DELLA subfamily. May be a homodimer. Interacts directly with the GID2 component of the SCF(GID2) complex. Interacts with GID1 in a GA-dependent manner, probably leading to its interaction with GID2 and its subsequent degradation. Interacts with D14 and GID1 in an strigolactone-dependent manner. Interacts with HD16/EL1. Phosphorylated on Ser/Thr residues in the N-terminal part. Both phosphorylated and unphosphorylated forms are degraded upon GA treatment, suggesting that phosphorylation does not trigger ubiquitination. Phosphorylated by HD16/EL1. Phosphorylation enhances its stability. In terms of processing, ubiquitinated. Upon GA application it is ubiquitinated by the SCF(GID2) complex, leading to its subsequent degradation. As to expression, expressed in nodes, internodes, leaf sheats of young seedlings and ears of adult plants. Weakly expressed in leaf blade and root.

It localises to the nucleus. Its function is as follows. Probable transcriptional regulator that acts as a repressor of the gibberellin (GA) signaling pathway. Probably acts by participating in large multiprotein complexes that repress transcription of GA-inducible genes. Upon GA application, it is degraded by the proteasome, allowing the GA signaling pathway. In contrast, its overexpression prevents the GA signaling pathway and induces a dwarf phenotype. In Oryza sativa subsp. japonica (Rice), this protein is DELLA protein SLR1.